Reading from the N-terminus, the 61-residue chain is MAQVRLAGKQEEIEQLIRSFEQHYDVSYTSKEYGRTNPKYKYSKDSRVYLELKLKSAKIEK.

This is an uncharacterized protein from Bacillus subtilis (strain 168).